A 170-amino-acid polypeptide reads, in one-letter code: RNA pyrophosphohydrolase (170 aa).

A Nudix hydrolase domain is found at 6 to 149 (GFRPNVGIIL…KRDVYRRALK (144 aa)). Residues 39–60 (GGIKHNESPENALYRELEEEVG) carry the Nudix box motif.

This sequence belongs to the Nudix hydrolase family. RppH subfamily. It depends on a divalent metal cation as a cofactor.

Functionally, accelerates the degradation of transcripts by removing pyrophosphate from the 5'-end of triphosphorylated RNA, leading to a more labile monophosphorylated state that can stimulate subsequent ribonuclease cleavage. In Saccharophagus degradans (strain 2-40 / ATCC 43961 / DSM 17024), this protein is RNA pyrophosphohydrolase.